The sequence spans 92 residues: UPF0250 protein XCC3453 (92 aa).

The protein belongs to the UPF0250 family.

This Xanthomonas campestris pv. campestris (strain ATCC 33913 / DSM 3586 / NCPPB 528 / LMG 568 / P 25) protein is UPF0250 protein XCC3453.